A 674-amino-acid polypeptide reads, in one-letter code: Probable protein phosphatase 2C 66 (674 aa).

A Phosphoserine modification is found at Ser-125. Disordered regions lie at residues 153-175 and 202-247; these read YSGP…RKKP and KSVI…KQSM. Residues 244 to 665 enclose the PPM-type phosphatase domain; that stretch reads KQSMNSVLDV…DDVSVIVISL (422 aa). Mn(2+) contacts are provided by Asp-282 and Gly-283. The span at 373–384 shows a compositional bias: basic and acidic residues; it reads NNKTKSDNRCDQ. A disordered region spans residues 373-392; it reads NNKTKSDNRCDQKGSNSTTT. The Mn(2+) site is built by Asp-593 and Asp-656.

The protein belongs to the PP2C family. Requires Mg(2+) as cofactor. Mn(2+) is required as a cofactor. Expressed at low level in seedlings, roots, leaves, stems, young inflorescences, flowers and siliques.

The protein localises to the nucleus. The catalysed reaction is O-phospho-L-seryl-[protein] + H2O = L-seryl-[protein] + phosphate. It catalyses the reaction O-phospho-L-threonyl-[protein] + H2O = L-threonyl-[protein] + phosphate. This is Probable protein phosphatase 2C 66 (PLL2) from Arabidopsis thaliana (Mouse-ear cress).